A 160-amino-acid chain; its full sequence is MIP18 family protein F45G2.10 (160 aa).

Residues 1-32 (MGQERLDNANPTLFDSKPRHRPVTGTERDESV) form a disordered region.

It belongs to the MIP18 family.

Its function is as follows. May play a role in chromosome segregation through establishment of sister chromatid cohesion. This Caenorhabditis elegans protein is MIP18 family protein F45G2.10.